A 272-amino-acid chain; its full sequence is Glutamate 5-kinase (272 aa).

Residue K15 participates in ATP binding. Residues S55, D142, and N158 each coordinate substrate. Residues 178-179 and 220-226 each bind ATP; these read SD and TGGMLSK.

Belongs to the glutamate 5-kinase family.

The protein resides in the cytoplasm. It carries out the reaction L-glutamate + ATP = L-glutamyl 5-phosphate + ADP. The protein operates within amino-acid biosynthesis; L-proline biosynthesis; L-glutamate 5-semialdehyde from L-glutamate: step 1/2. Catalyzes the transfer of a phosphate group to glutamate to form L-glutamate 5-phosphate. This is Glutamate 5-kinase from Streptococcus equi subsp. zooepidemicus (strain H70).